A 136-amino-acid polypeptide reads, in one-letter code: Ribulose bisphosphate carboxylase small subunit, chloroplastic 1 (136 aa).

The N-terminal 13 residues, 1–13, are a transit peptide targeting the chloroplast; it reads NTDITSNGERVKC.

The protein belongs to the RuBisCO small chain family. In terms of assembly, heterohexadecamer of 8 large and 8 small subunits.

It localises to the plastid. The protein resides in the chloroplast. In terms of biological role, ruBisCO catalyzes two reactions: the carboxylation of D-ribulose 1,5-bisphosphate, the primary event in carbon dioxide fixation, as well as the oxidative fragmentation of the pentose substrate. Both reactions occur simultaneously and in competition at the same active site. Although the small subunit is not catalytic it is essential for maximal activity. The protein is Ribulose bisphosphate carboxylase small subunit, chloroplastic 1 of Pisum sativum (Garden pea).